A 139-amino-acid chain; its full sequence is Nucleoside diphosphate kinase (139 aa).

The ATP site is built by Lys10, Phe58, Arg86, Thr92, Arg103, and Asn113. His116 (pros-phosphohistidine intermediate) is an active-site residue.

Belongs to the NDK family. Homotetramer. Requires Mg(2+) as cofactor.

Its subcellular location is the cytoplasm. The catalysed reaction is a 2'-deoxyribonucleoside 5'-diphosphate + ATP = a 2'-deoxyribonucleoside 5'-triphosphate + ADP. It catalyses the reaction a ribonucleoside 5'-diphosphate + ATP = a ribonucleoside 5'-triphosphate + ADP. Major role in the synthesis of nucleoside triphosphates other than ATP. The ATP gamma phosphate is transferred to the NDP beta phosphate via a ping-pong mechanism, using a phosphorylated active-site intermediate. The sequence is that of Nucleoside diphosphate kinase from Oleidesulfovibrio alaskensis (strain ATCC BAA-1058 / DSM 17464 / G20) (Desulfovibrio alaskensis).